Reading from the N-terminus, the 445-residue chain is UPF0210 protein llmg_1581 (445 aa).

It belongs to the UPF0210 family. As to quaternary structure, homodimer.

The sequence is that of UPF0210 protein llmg_1581 from Lactococcus lactis subsp. cremoris (strain MG1363).